The primary structure comprises 353 residues: MERPAAGEIDANKCDHLSRGEEGTGDLETSPVGSLADLPFAAVDIQDDCGLPDVPQGNVPQGNPKRSKENRGDRNDHVKKRKKAKKDYQPNYFLSIPITNKKITAGIKVLQNSILRQDNRLTKAMVGDGSFHITLLVMQLLNEDEVNIGTDALLELKPFVEEILEGKHLTLPFHGIGTFQGQVGFVKLADGDHVSALLEIAETAKRTFQEKGILAGESRTFKPHLTFMKLSKAPMLWKKGVRKIEPGLYEQFIDHRFGEEILYQIDLCSMLKKKQSNGYYHCESSIVIGEKDRKEPEDAELVRLSKRLVENAVLKAVQQYLEETQNKKQPGEGNSVKAEEGDRNGDGSDNNRK.

2 stretches are compositionally biased toward basic and acidic residues: residues Met1–Glu22 and Arg66–Asp76. 2 disordered regions span residues Met1 to Gly33 and Asp47 to Lys85. Residues Thr134 and His224–Thr226 contribute to the AMP site. CMP-binding positions include Thr134 and His224–Thr226. Residues Ala299–Lys353 form a PKA-RII-alpha subunit binding domain region. The RI-alpha-binding stretch occupies residues Glu300–Thr324. Residues Leu301–Leu314 form an RII-binding region. Residues Leu321 to Lys353 form a disordered region. Residues Lys337 to Lys353 show a composition bias toward basic and acidic residues.

Binds cAMP-dependent protein kinase (PKA). Interacts with PRKCA; only the cytoplasmic form is capable of interacting with PRKCA. Expressed highly in the heart, and moderately in brain, lung, liver, kidney and testis. Hardly detectable in spleen and skeletal muscle. In kidney, isoform Delta is expressed in the principal cells of the IMCD.

It is found in the nucleus. The protein resides in the cytoplasm. The protein localises to the cell membrane. Its function is as follows. Probably targets cAMP-dependent protein kinase (PKA) to the cellular membrane or cytoskeletal structures. The membrane-associated form reduces epithelial sodium channel (ENaC) activity, whereas the free cytoplasmic form may negatively regulate ENaC channel feedback inhibition by intracellular sodium. Isoform Delta may be involved in shuttling aquaporin-2 (AQP2) to the plasma membrane. This chain is A-kinase anchor protein 7 isoforms delta and gamma, found in Rattus norvegicus (Rat).